The sequence spans 78 residues: Large ribosomal subunit protein bL28 (78 aa).

The protein belongs to the bacterial ribosomal protein bL28 family.

The protein is Large ribosomal subunit protein bL28 of Bordetella avium (strain 197N).